We begin with the raw amino-acid sequence, 86 residues long: Omega-theraphotoxin-Hhn1b (86 aa).

Positions 1–21 (MKSIVFVALFGLALLAVVCSA) are cleaved as a signal peptide. Positions 22–50 (SEDAHKELLKEVVRAMVVDKTDAVQAEER) are excised as a propeptide. Disulfide bonds link Cys52–Cys66, Cys59–Cys71, and Cys65–Cys78.

It belongs to the neurotoxin 10 (Hwtx-1) family. 17 (Hntx-9) subfamily. Expressed by the venom gland.

Its subcellular location is the secreted. Its function is as follows. Ion channel inhibitor. The protein is Omega-theraphotoxin-Hhn1b of Cyriopagopus hainanus (Chinese bird spider).